The primary structure comprises 290 residues: Agmatinase (290 aa).

Residues His112, Asp135, His137, Asp139, Asp216, and Asp218 each coordinate Mn(2+).

This sequence belongs to the arginase family. Agmatinase subfamily. Mn(2+) serves as cofactor.

It carries out the reaction agmatine + H2O = urea + putrescine. The protein operates within amine and polyamine biosynthesis; putrescine biosynthesis via agmatine pathway; putrescine from agmatine: step 1/1. Its function is as follows. Catalyzes the formation of putrescine from agmatine. This chain is Agmatinase (speB), found in Bacillus anthracis.